The primary structure comprises 580 residues: Mucin-1 (580 aa).

The first 22 residues, 1-22, serve as a signal peptide directing secretion; sequence MTPDIQAPFLSLLLLFPVLTVA. Residues 23-489 are Extracellular-facing; sequence NVPTLTTSDS…GSGVPGWGIA (467 aa). Residues 28–37 are compositionally biased toward polar residues; sequence TTSDSINPRR. The interval 28–359 is disordered; that stretch reads TTSDSINPRR…SIALSTSSNP (332 aa). Over residues 38-88 the composition is skewed to low complexity; it reads TTPVSTTQSSPTSSPTKETSWSTTTTLLTASSPAPSPAASPGHDGASTPTS. 11 tandem repeats follow at residues 70-89, 90-109, 110-129, 130-149, 150-169, 170-189, 190-209, 210-229, 230-249, 250-269, and 270-289. An 11 X 20 AA approximate tandem repeats of P-A-P-S-P-A-A-S-P-G-H-D-G-A-S-T-P-T-S-S region spans residues 70–289; the sequence is PAPSPAASPG…QHGASSPTSS (220 aa). 3 O-linked (GalNAc...) serine glycosylation sites follow: S73, S77, and S84. O-linked (GalNAc...) threonine glycosylation is found at T85 and T87. Residues S88 and S89 are each glycosylated (O-linked (GalNAc...) serine). Composition is skewed to low complexity over residues 96–108, 116–128, 136–148, 156–168, 176–188, 196–208, 216–228, 236–248, and 256–306; these read ASPG…TPTS, ASPG…SPTG, and ASPG…MVTS. N161 is a glycosylation site (N-linked (GlcNAc...) asparagine). N201 carries an N-linked (GlcNAc...) asparagine glycan. The N-linked (GlcNAc...) asparagine glycan is linked to N241. Residues 308 to 344 are compositionally biased toward polar residues; that stretch reads HKGTSSRATMTPVSKGTPSSVPSSETAPTAASHITRT. Positions 345-357 are enriched in low complexity; that stretch reads AASSPSIALSTSS. Positions 368-475 constitute an SEA domain; it reads RVSLYFLSFR…VSVYSAPFPS (108 aa). 2 N-linked (GlcNAc...) asparagine glycosylation sites follow: N384 and N460. The chain crosses the membrane as a helical span at residues 490–510; it reads LLVLVCVLVALAIIYLIALVV. 2 S-palmitoyl cysteine lipidation sites follow: C511 and C513. The Cytoplasmic segment spans residues 511–580; the sequence is CQCGRKKCEQ…TNLAATSANL (70 aa). The tract at residues 519–555 is interaction with P53; that stretch reads EQLDVFPTLDAYHPMSEYSTYHTHGRYVPPGSTKRSP. Y530 carries the phosphotyrosine; by PDGFR modification. An Interaction with GRB2 motif is present at residues 530–533; sequence YHPM. Y539 is modified (phosphotyrosine). The segment at 544–563 is disordered; that stretch reads RYVPPGSTKRSPYEEVSAGN. At Y545 the chain carries Phosphotyrosine; by PDGFR. Residues 550–557 form a required for interaction with GSK3B region; sequence STKRSPYE. T551 is modified (phosphothreonine; by PKC/PRKCD). S554 bears the Phosphoserine; by GSK3-beta mark. Y556 bears the Phosphotyrosine; by CSK, EGFR and SRC mark. The Interaction with SRC and ESR1 motif lies at 556-559; that stretch reads YEEV. Residues 560–568 form a required for interaction with beta- and gamma-catenins region; it reads SAGNGGSNL. The residue at position 570 (Y570) is a Phosphotyrosine. A Required for interaction with AP1S2 motif is present at residues 570–572; the sequence is YTN.

In terms of assembly, the alpha subunit forms a tight, non-covalent heterodimeric complex with the proteolytically-released beta subunit. Binds directly the SH2 domain of GRB2, and forms a MUC1/GRB2/SOS1 complex involved in RAS signaling. The cytoplasmic tail (MUC1CT) interacts with several proteins such as, SRC, CTNNB1 and ERBs. Interaction with the SH2 domain of CSK decreases interaction with GSK3B. Interacts with CTNNB1/beta-catenin and JUP/gamma-catenin and promotes cell adhesion. Interaction with JUP/gamma-catenin is induced by heregulin. Binds PRKCD, ERBB2, ERBB3 and ERBB4. Heregulin (HRG) stimulates the interaction with ERBB2 and, to a much lesser extent, the interaction with ERBB3 and ERBB4. Interacts with P53 in response to DNA damage. Interacts with KLF4. Interacts with estrogen receptor alpha/ESR1, through its DNA-binding domain, and stimulates its transcription activity. Binds ADAM17. Post-translationally, highly glycosylated (N- and O-linked carbohydrates and sialic acid). O-linked glycosylation consists mainly of GalNAc, galactose, and sialic acid. The ratio from pools of milk from different dairy breeds is GalNAc: GlcNAc:galactose:mannose:sialic acid is 14:1:10:1:15. In terms of processing, proteolytic cleavage in the SEA domain occurs in the endoplasmic reticulum by an autoproteolytic mechanism and requires the full-length SEA domain as well as requiring a Ser, Thr or Cys residue at the P + 1 site. Ectodomain shedding is mediated by ADAM17 in uterine epithelial cells. Dual palmitoylation on cysteine residues in the CQC motif is required for recycling from endosomes back to the plasma membrane. Post-translationally, phosphorylated on tyrosines and serine residues in the C-terminal. Phosphorylation on tyrosines in the C-terminal increases the nuclear location of MUC1 and beta-catenin. Phosphorylation by PKC delta induces binding of MUC1 to beta-catenin/CTNNB1 and thus decreases the formation of the beta-catenin/E-cadherin complex. Src-mediated phosphorylation inhibits interaction with GSK3B. Csk- or Src- or EGFR-mediated phosphorylation on Tyr-556 increases binding to beta-catenin/CTNNB1. GSK3B-mediated phosphorylation on Ser-554 decreases this interaction but restores the formation of the beta-cadherin/E-cadherin complex. On T-cell receptor activation, phosphorylated by LCK. PDGFR-mediated phosphorylation increases nuclear colocalization of MUC1CT and CTNNB1. As to expression, expressed on the apical surface of epithelia cells, and on the milk fat globule membrane (MGGM).

It is found in the apical cell membrane. It localises to the cell membrane. Its subcellular location is the cytoplasm. The protein localises to the nucleus. Its function is as follows. The alpha subunit has cell adhesive properties. May provide a protective layer on epithelial cells against bacterial and enzyme attack. The beta subunit contains a C-terminal domain which is involved in cell signaling, through phosphorylations and protein-protein interactions. Modulates signaling in ERK, Src and NF-kappa-B pathways. In activated T-cells, influences directly or indirectly the Ras/MAPK pathway. Promotes tumor progression. Regulates P53-mediated transcription and determines cell fate in the genotoxic stress response. Binds, together with KLF4, the PE21 promoter element of P53 and represses P53 activity. In Bos taurus (Bovine), this protein is Mucin-1 (MUC1).